Here is a 393-residue protein sequence, read N- to C-terminus: S-adenosylmethionine synthase (393 aa).

Histidine 16 lines the ATP pocket. Aspartate 18 is a binding site for Mg(2+). Glutamate 44 contacts K(+). The L-methionine site is built by glutamate 57 and glutamine 100. A flexible loop region spans residues glutamine 100 to histidine 110. ATP contacts are provided by residues aspartate 167–lysine 169, arginine 238–phenylalanine 239, aspartate 247, arginine 253–lysine 254, alanine 270, and lysine 274. Aspartate 247 is a binding site for L-methionine. Lysine 278 is an L-methionine binding site.

This sequence belongs to the AdoMet synthase family. Homotetramer; dimer of dimers. It depends on Mg(2+) as a cofactor. Requires K(+) as cofactor.

The protein resides in the cytoplasm. The catalysed reaction is L-methionine + ATP + H2O = S-adenosyl-L-methionine + phosphate + diphosphate. Its pathway is amino-acid biosynthesis; S-adenosyl-L-methionine biosynthesis; S-adenosyl-L-methionine from L-methionine: step 1/1. Catalyzes the formation of S-adenosylmethionine (AdoMet) from methionine and ATP. The overall synthetic reaction is composed of two sequential steps, AdoMet formation and the subsequent tripolyphosphate hydrolysis which occurs prior to release of AdoMet from the enzyme. The sequence is that of S-adenosylmethionine synthase from Leptothrix cholodnii (strain ATCC 51168 / LMG 8142 / SP-6) (Leptothrix discophora (strain SP-6)).